The primary structure comprises 338 residues: MKVFYDKDADLSLIKGKKVTIIGYGSQGHAHALNLKDSGVNVTVGLRKDGASWSKAANAGLTVKEVDEAVKDADVVMMLLPDEQIADVYNKEVHGNIKQGAALAFAHGFNVHYGQVQSRADLDVIMIAPKAPGHKVRGTYAQGGGVPHLIAVYQDKSGSARDVALSYATANGGGRAGIIETNFREETETDLFGEQAVLCGGAVELIKAGFETLVEAGYAPEMAYFECLHELKLIVDLIYEGGIANMNYSISNNAEYGEYVTGPRVVTEDTKNAMRQCLKDIQTGEYAKSFILENKAGAPTLISRRRLNAEHDIEVVGAKLRAMMPWIAKNKLVDETKN.

The KARI N-terminal Rossmann domain maps to M1 to T181. NADP(+)-binding positions include Y24 to Q27, R47, and S52. The active site involves H107. Residue G133 participates in NADP(+) binding. The region spanning N182–I327 is the KARI C-terminal knotted domain. Mg(2+)-binding residues include D190, E194, E226, and E230. S251 is a binding site for substrate.

Belongs to the ketol-acid reductoisomerase family. Mg(2+) serves as cofactor.

The enzyme catalyses (2R)-2,3-dihydroxy-3-methylbutanoate + NADP(+) = (2S)-2-acetolactate + NADPH + H(+). The catalysed reaction is (2R,3R)-2,3-dihydroxy-3-methylpentanoate + NADP(+) = (S)-2-ethyl-2-hydroxy-3-oxobutanoate + NADPH + H(+). It functions in the pathway amino-acid biosynthesis; L-isoleucine biosynthesis; L-isoleucine from 2-oxobutanoate: step 2/4. Its pathway is amino-acid biosynthesis; L-valine biosynthesis; L-valine from pyruvate: step 2/4. In terms of biological role, involved in the biosynthesis of branched-chain amino acids (BCAA). Catalyzes an alkyl-migration followed by a ketol-acid reduction of (S)-2-acetolactate (S2AL) to yield (R)-2,3-dihydroxy-isovalerate. In the isomerase reaction, S2AL is rearranged via a Mg-dependent methyl migration to produce 3-hydroxy-3-methyl-2-ketobutyrate (HMKB). In the reductase reaction, this 2-ketoacid undergoes a metal-dependent reduction by NADPH to yield (R)-2,3-dihydroxy-isovalerate. This Polynucleobacter necessarius subsp. necessarius (strain STIR1) protein is Ketol-acid reductoisomerase (NADP(+)).